The chain runs to 172 residues: Adenine phosphoribosyltransferase (172 aa).

This sequence belongs to the purine/pyrimidine phosphoribosyltransferase family. In terms of assembly, homodimer.

It is found in the cytoplasm. The enzyme catalyses AMP + diphosphate = 5-phospho-alpha-D-ribose 1-diphosphate + adenine. It functions in the pathway purine metabolism; AMP biosynthesis via salvage pathway; AMP from adenine: step 1/1. In terms of biological role, catalyzes a salvage reaction resulting in the formation of AMP, that is energically less costly than de novo synthesis. The protein is Adenine phosphoribosyltransferase of Exiguobacterium sibiricum (strain DSM 17290 / CCUG 55495 / CIP 109462 / JCM 13490 / 255-15).